Here is a 151-residue protein sequence, read N- to C-terminus: Ubiquitin-conjugating enzyme E2 2 (151 aa).

A disordered region spans residues M1–A26. Residues S4–E150 form the UBC core domain. C88 serves as the catalytic Glycyl thioester intermediate.

Belongs to the ubiquitin-conjugating enzyme family.

It is found in the cytoplasm. Its subcellular location is the nucleus. It carries out the reaction S-ubiquitinyl-[E1 ubiquitin-activating enzyme]-L-cysteine + [E2 ubiquitin-conjugating enzyme]-L-cysteine = [E1 ubiquitin-activating enzyme]-L-cysteine + S-ubiquitinyl-[E2 ubiquitin-conjugating enzyme]-L-cysteine.. The protein operates within protein modification; protein ubiquitination. Catalyzes the covalent attachment of ubiquitin to other proteins. Plays a role in transcription regulation by catalyzing the monoubiquitination of histone H2B to form H2BK123ub1. H2BK123ub1 gives a specific tag for epigenetic transcriptional activation and is also a prerequisite for H3K4me and H3K79me formation. Also involved in postreplication repair of UV-damaged DNA, in N-end rule-dependent protein degradation and in sporulation. The chain is Ubiquitin-conjugating enzyme E2 2 (uvsJ) from Emericella nidulans (strain FGSC A4 / ATCC 38163 / CBS 112.46 / NRRL 194 / M139) (Aspergillus nidulans).